Reading from the N-terminus, the 83-residue chain is Small ribosomal subunit protein eS21 (83 aa).

Belongs to the eukaryotic ribosomal protein eS21 family. As to quaternary structure, component of the 40S small ribosomal subunit.

The protein localises to the cytoplasm. Its subcellular location is the cytosol. The protein resides in the rough endoplasmic reticulum. This Ixodes scapularis (Black-legged tick) protein is Small ribosomal subunit protein eS21 (RpS21).